A 463-amino-acid chain; its full sequence is Kynurenine 3-monooxygenase (463 aa).

Belongs to the aromatic-ring hydroxylase family. KMO subfamily. The cofactor is FAD.

Its subcellular location is the mitochondrion outer membrane. The enzyme catalyses L-kynurenine + NADPH + O2 + H(+) = 3-hydroxy-L-kynurenine + NADP(+) + H2O. The protein operates within cofactor biosynthesis; NAD(+) biosynthesis; quinolinate from L-kynurenine: step 1/3. Its function is as follows. Catalyzes the hydroxylation of L-kynurenine (L-Kyn) to form 3-hydroxy-L-kynurenine (L-3OHKyn). Required for synthesis of quinolinic acid. This chain is Kynurenine 3-monooxygenase, found in Yarrowia lipolytica (strain CLIB 122 / E 150) (Yeast).